The chain runs to 106 residues: Cyclin-dependent protein kinase inhibitor SMR15 (106 aa).

Probable cyclin-dependent protein kinase (CDK) inhibitor that functions as a repressor of mitosis in the endoreduplication cell cycle. The protein is Cyclin-dependent protein kinase inhibitor SMR15 of Arabidopsis thaliana (Mouse-ear cress).